Reading from the N-terminus, the 217-residue chain is Growth hormone variant (217 aa).

The first 26 residues, 1-26 (MAAGSRTSLLLAFGLLCLPWLQEGSA), serve as a signal peptide directing secretion. 2 disulfides stabilise this stretch: cysteine 79–cysteine 191 and cysteine 208–cysteine 215. Serine 132 is modified (phosphoserine). An N-linked (GlcNAc...) asparagine glycan is attached at asparagine 166. A Phosphoserine modification is found at serine 176.

This sequence belongs to the somatotropin/prolactin family. As to expression, expressed in the placenta.

Its subcellular location is the secreted. Plays an important role in growth control. Its major role in stimulating body growth is to stimulate the liver and other tissues to secrete IGF1. It stimulates both the differentiation and proliferation of myoblasts. It also stimulates amino acid uptake and protein synthesis in muscle and other tissues. The protein is Growth hormone variant (GH2) of Pan troglodytes (Chimpanzee).